Here is a 726-residue protein sequence, read N- to C-terminus: NHL repeat-containing protein 2 (726 aa).

In terms of domain architecture, Thioredoxin spans 43 to 200 (QKVDGWEQDL…TSIALKYYKD (158 aa)). NHL repeat units follow at residues 212–254 (KLYK…VWKN), 265–307 (NPGR…IDLE), 335–369 (ISSPWDVVFGTSGSEVQRGDILWIAMAGTHQIWAL), 409–439 (FAQPSGLSLASEDPWSCLFVADSESSTVRTV), 461–505 (AFGD…VDPK), and 518–562 (TNNV…MDLE).

In terms of assembly, monomer. As to expression, ubiquitous. Detected in heart, kidney, muscle, brain, lung, liver and in skin fibroblasts (at protein level).

It localises to the cytoplasm. The protein resides in the cytosol. Functionally, required for normal embryonic development. This Homo sapiens (Human) protein is NHL repeat-containing protein 2 (NHLRC2).